We begin with the raw amino-acid sequence, 161 residues long: Lipoprotein signal peptidase (161 aa).

Transmembrane regions (helical) follow at residues 9 to 29, 63 to 83, and 88 to 108; these read ISLL…WLIT, KMLF…IFYI, and FNLF…GNFI. Residues Asp118 and Asp136 contribute to the active site. Residues 131 to 151 traverse the membrane as a helical segment; it reads IFNIADSSLTIGVIFVIITLI.

Belongs to the peptidase A8 family.

The protein resides in the cell membrane. It catalyses the reaction Release of signal peptides from bacterial membrane prolipoproteins. Hydrolyzes -Xaa-Yaa-Zaa-|-(S,diacylglyceryl)Cys-, in which Xaa is hydrophobic (preferably Leu), and Yaa (Ala or Ser) and Zaa (Gly or Ala) have small, neutral side chains.. It functions in the pathway protein modification; lipoprotein biosynthesis (signal peptide cleavage). This protein specifically catalyzes the removal of signal peptides from prolipoproteins. This Staphylococcus epidermidis (strain ATCC 35984 / DSM 28319 / BCRC 17069 / CCUG 31568 / BM 3577 / RP62A) protein is Lipoprotein signal peptidase.